A 107-amino-acid polypeptide reads, in one-letter code: Putative ankyrin repeat protein L14 (107 aa).

ANK repeat units lie at residues 19–48 (DNNY…NIRA), 49–78 (DNDC…NIRA), and 80–107 (NDCA…AVLS).

The chain is Putative ankyrin repeat protein L14 from Acanthamoeba polyphaga (Amoeba).